We begin with the raw amino-acid sequence, 326 residues long: MTAQAALATAANDGELRHDWSAEEIEALFALPFNDLMFEAQKVHRAHFDANRVQVSRLISIKTGSCPEDCSYCPQSAHYATGLEKEKLLAVEEVVESARQAKEEGASRFCMGAAWRGPKGDDFEVAVAMIEGVKALGMETCATFGLLDKWQAQRLKEAGLDYYNHNIDTSPEHYSEVITTRTFQDRLDTLDVVRDAGLHVCSGGIVGLGETRTDRARMIQTLANMPKHPDSVPINLLIPIQGTPLADAERPDSFDFIRTIAVARITMPKSFVRLSAGREGMTEEMQALCFLAGANSVFCGQKLLTAKNAAPGKDKSLFGKLGLQPM.

The Radical SAM core domain maps to 51–278; it reads NRVQVSRLIS…KSFVRLSAGR (228 aa). Residues Cys66, Cys70, and Cys73 each coordinate [4Fe-4S] cluster. Cys110, Cys141, Cys201, and Arg273 together coordinate [2Fe-2S] cluster.

Belongs to the radical SAM superfamily. Biotin synthase family. In terms of assembly, homodimer. [4Fe-4S] cluster is required as a cofactor. Requires [2Fe-2S] cluster as cofactor.

The enzyme catalyses (4R,5S)-dethiobiotin + (sulfur carrier)-SH + 2 reduced [2Fe-2S]-[ferredoxin] + 2 S-adenosyl-L-methionine = (sulfur carrier)-H + biotin + 2 5'-deoxyadenosine + 2 L-methionine + 2 oxidized [2Fe-2S]-[ferredoxin]. It functions in the pathway cofactor biosynthesis; biotin biosynthesis; biotin from 7,8-diaminononanoate: step 2/2. Its function is as follows. Catalyzes the conversion of dethiobiotin (DTB) to biotin by the insertion of a sulfur atom into dethiobiotin via a radical-based mechanism. The chain is Biotin synthase from Paramagnetospirillum magneticum (strain ATCC 700264 / AMB-1) (Magnetospirillum magneticum).